A 423-amino-acid chain; its full sequence is Adenylosuccinate synthetase (423 aa).

Residues Gly-12–Lys-18 and Gly-40–Thr-42 each bind GTP. Residue Asp-13 is the Proton acceptor of the active site. Mg(2+) contacts are provided by Asp-13 and Gly-40. Residues Asp-13–Lys-16, Asn-38–His-41, Thr-129, Arg-143, Gln-224, Thr-239, and Arg-303 contribute to the IMP site. Residue His-41 is the Proton donor of the active site. A substrate-binding site is contributed by Ser-299–Arg-305. GTP contacts are provided by residues Arg-305, Lys-331 to Asp-333, and Ser-412 to Gly-414.

Belongs to the adenylosuccinate synthetase family. In terms of assembly, homodimer. Mg(2+) is required as a cofactor.

It is found in the cytoplasm. It carries out the reaction IMP + L-aspartate + GTP = N(6)-(1,2-dicarboxyethyl)-AMP + GDP + phosphate + 2 H(+). The protein operates within purine metabolism; AMP biosynthesis via de novo pathway; AMP from IMP: step 1/2. In terms of biological role, plays an important role in the de novo pathway of purine nucleotide biosynthesis. Catalyzes the first committed step in the biosynthesis of AMP from IMP. This Flavobacterium johnsoniae (strain ATCC 17061 / DSM 2064 / JCM 8514 / BCRC 14874 / CCUG 350202 / NBRC 14942 / NCIMB 11054 / UW101) (Cytophaga johnsonae) protein is Adenylosuccinate synthetase.